We begin with the raw amino-acid sequence, 228 residues long: Cytidylate kinase (228 aa).

Residue glycine 12–threonine 20 coordinates ATP.

The protein belongs to the cytidylate kinase family. Type 1 subfamily.

It is found in the cytoplasm. The catalysed reaction is CMP + ATP = CDP + ADP. It carries out the reaction dCMP + ATP = dCDP + ADP. The sequence is that of Cytidylate kinase from Photobacterium profundum (strain SS9).